We begin with the raw amino-acid sequence, 380 residues long: 4-hydroxy-3-methylbut-2-en-1-yl diphosphate synthase (flavodoxin) (380 aa).

[4Fe-4S] cluster contacts are provided by cysteine 273, cysteine 276, cysteine 308, and glutamate 315.

It belongs to the IspG family. The cofactor is [4Fe-4S] cluster.

It catalyses the reaction (2E)-4-hydroxy-3-methylbut-2-enyl diphosphate + oxidized [flavodoxin] + H2O + 2 H(+) = 2-C-methyl-D-erythritol 2,4-cyclic diphosphate + reduced [flavodoxin]. It functions in the pathway isoprenoid biosynthesis; isopentenyl diphosphate biosynthesis via DXP pathway; isopentenyl diphosphate from 1-deoxy-D-xylulose 5-phosphate: step 5/6. In terms of biological role, converts 2C-methyl-D-erythritol 2,4-cyclodiphosphate (ME-2,4cPP) into 1-hydroxy-2-methyl-2-(E)-butenyl 4-diphosphate. In Leifsonia xyli subsp. xyli (strain CTCB07), this protein is 4-hydroxy-3-methylbut-2-en-1-yl diphosphate synthase (flavodoxin).